Reading from the N-terminus, the 331-residue chain is Centriolar satellite-associated tubulin polyglutamylase complex regulator 1 (331 aa).

The required for interaction with PCM1 stretch occupies residues 1–111; the sequence is MLSPERLALP…HCLLQLLCPD (111 aa). Residues 1-225 are required for interaction with TPGS1, LRRC49, and TTLL1; it reads MLSPERLALP…SCPPPALVKE (225 aa). The required for interaction with TPGS2 stretch occupies residues 112–331; it reads FPLELTQKAA…STEETDESET (220 aa). Residues 292–331 form a disordered region; the sequence is SCLPSRTPPRVGSPWKPLHRSRKLDAESDGSTEETDESET. The segment covering 318–331 has biased composition (acidic residues); sequence ESDGSTEETDESET. Residue serine 319 is modified to Phosphoserine.

This sequence belongs to the CSTPP1 family. Interacts with PCM1. Interacts with TTLL1, TPGS1, TPGS2 and LRRC49; the interactions link CSTPP1 to the complex TPGC. Binds to alpha-tubulin.

The protein resides in the cytoplasm. It localises to the cytoskeleton. Its subcellular location is the microtubule organizing center. The protein localises to the centrosome. It is found in the centriolar satellite. Its function is as follows. Regulator of the tubulin polyglutamylase complex (TPGC) that controls cytoskeletal organization, nuclear shape, and cilium disassembly by balancing microtubule and actin assembly. Regulates the assembly and stability of the TPGC and thereby modulates polyglutamylation of the microtubule, which antagonizes MAP4 binding. The sequence is that of Centriolar satellite-associated tubulin polyglutamylase complex regulator 1 (Cstpp1) from Rattus norvegicus (Rat).